We begin with the raw amino-acid sequence, 485 residues long: Argininosuccinate lyase (485 aa).

Belongs to the lyase 1 family. Argininosuccinate lyase subfamily.

It localises to the cytoplasm. It catalyses the reaction 2-(N(omega)-L-arginino)succinate = fumarate + L-arginine. The protein operates within amino-acid biosynthesis; L-arginine biosynthesis; L-arginine from L-ornithine and carbamoyl phosphate: step 3/3. This is Argininosuccinate lyase from Paracidovorax citrulli (strain AAC00-1) (Acidovorax citrulli).